Consider the following 350-residue polypeptide: Variable large protein 4 (350 aa).

Residues 1–18 (MRRRISAIIMTLFMVLVS) form the signal peptide. C19 carries the N-palmitoyl cysteine lipid modification. C19 carries S-diacylglycerol cysteine lipidation.

Belongs to the variable large protein (Vlp) family. Delta subfamily.

The protein localises to the cell outer membrane. The Vlp and Vsp proteins are antigenically distinct proteins, only one vlp or vsp gene is transcriptionally active at any one time. Switching between these genes is a mechanism of host immune response evasion. The polypeptide is Variable large protein 4 (Borrelia hermsii).